The sequence spans 459 residues: UDP-N-acetylmuramoylalanine--D-glutamate ligase (459 aa).

Residue Gly-119–Thr-125 participates in ATP binding.

Belongs to the MurCDEF family.

The protein resides in the cytoplasm. It catalyses the reaction UDP-N-acetyl-alpha-D-muramoyl-L-alanine + D-glutamate + ATP = UDP-N-acetyl-alpha-D-muramoyl-L-alanyl-D-glutamate + ADP + phosphate + H(+). Its pathway is cell wall biogenesis; peptidoglycan biosynthesis. Cell wall formation. Catalyzes the addition of glutamate to the nucleotide precursor UDP-N-acetylmuramoyl-L-alanine (UMA). The polypeptide is UDP-N-acetylmuramoylalanine--D-glutamate ligase (Lacticaseibacillus paracasei (strain ATCC 334 / BCRC 17002 / CCUG 31169 / CIP 107868 / KCTC 3260 / NRRL B-441) (Lactobacillus paracasei)).